We begin with the raw amino-acid sequence, 294 residues long: Maltose/maltodextrin import ATP-binding protein MalK (294 aa).

Residues 4–233 (VQLRNVTKAW…PADRFVAGFI (230 aa)) form the ABC transporter domain. Residue 36-43 (GPSGCGKS) participates in ATP binding.

Belongs to the ABC transporter superfamily. Maltooligosaccharide importer (TC 3.A.1.1.1) family. In terms of assembly, the complex is composed of two ATP-binding proteins (MalK), two transmembrane proteins (MalG and MalK) and a solute-binding protein (MalE).

The protein resides in the cell inner membrane. It carries out the reaction D-maltose(out) + ATP + H2O = D-maltose(in) + ADP + phosphate + H(+). Its function is as follows. Part of the ABC transporter complex MalEFGK involved in maltose/maltodextrin import. Responsible for energy coupling to the transport system. In Klebsiella aerogenes (Enterobacter aerogenes), this protein is Maltose/maltodextrin import ATP-binding protein MalK.